The primary structure comprises 309 residues: Wnt inhibitor of Dorsal protein (309 aa).

Positions 1-16 (MIFAITFFMGITSTLA) are cleaved as a signal peptide. 10 cysteine pairs are disulfide-bonded: Cys-51-Cys-62, Cys-102-Cys-110, Cys-112-Cys-121, Cys-162-Cys-179, Cys-164-Cys-174, Cys-232-Cys-269, Cys-248-Cys-262, Cys-266-Cys-308, Cys-284-Cys-299, and Cys-286-Cys-296.

This sequence belongs to the Wnt family.

Its subcellular location is the secreted. The protein localises to the extracellular space. It is found in the extracellular matrix. In terms of biological role, binds as a ligand to a family of frizzled seven-transmembrane receptors and acts through a cascade of genes on the nucleus. This chain is Wnt inhibitor of Dorsal protein (wntD), found in Drosophila melanogaster (Fruit fly).